The chain runs to 281 residues: 2-dehydro-3-deoxyphosphooctonate aldolase (281 aa).

The protein belongs to the KdsA family.

Its subcellular location is the cytoplasm. The catalysed reaction is D-arabinose 5-phosphate + phosphoenolpyruvate + H2O = 3-deoxy-alpha-D-manno-2-octulosonate-8-phosphate + phosphate. It participates in carbohydrate biosynthesis; 3-deoxy-D-manno-octulosonate biosynthesis; 3-deoxy-D-manno-octulosonate from D-ribulose 5-phosphate: step 2/3. The protein operates within bacterial outer membrane biogenesis; lipopolysaccharide biosynthesis. The sequence is that of 2-dehydro-3-deoxyphosphooctonate aldolase from Marinobacter nauticus (strain ATCC 700491 / DSM 11845 / VT8) (Marinobacter aquaeolei).